Consider the following 86-residue polypeptide: MEVKIIDIGEDYVRLVIKGEGHTYLNLLQHYLVEDEDVIVARYNIPHPLIGEPEIYIKTSGVDPLEAVKRANEKIIAACNTLLEQL.

Belongs to the archaeal Rpo11/eukaryotic RPB11/RPC19 RNA polymerase subunit family. In terms of assembly, part of the RNA polymerase complex.

The protein localises to the cytoplasm. It catalyses the reaction RNA(n) + a ribonucleoside 5'-triphosphate = RNA(n+1) + diphosphate. Its function is as follows. DNA-dependent RNA polymerase (RNAP) catalyzes the transcription of DNA into RNA using the four ribonucleoside triphosphates as substrates. In Archaeoglobus fulgidus (strain ATCC 49558 / DSM 4304 / JCM 9628 / NBRC 100126 / VC-16), this protein is DNA-directed RNA polymerase subunit Rpo11.